A 351-amino-acid chain; its full sequence is Phosphoribosylformylglycinamidine cyclo-ligase (351 aa).

Belongs to the AIR synthase family.

Its subcellular location is the cytoplasm. It catalyses the reaction 2-formamido-N(1)-(5-O-phospho-beta-D-ribosyl)acetamidine + ATP = 5-amino-1-(5-phospho-beta-D-ribosyl)imidazole + ADP + phosphate + H(+). It functions in the pathway purine metabolism; IMP biosynthesis via de novo pathway; 5-amino-1-(5-phospho-D-ribosyl)imidazole from N(2)-formyl-N(1)-(5-phospho-D-ribosyl)glycinamide: step 2/2. This Burkholderia multivorans (strain ATCC 17616 / 249) protein is Phosphoribosylformylglycinamidine cyclo-ligase.